The chain runs to 279 residues: MNLKIKYYLELIRVKNCLTASFGTIIGGLIASNFNFGLIGYILLASLIVFLVCGFGNALNDIQDIEIDKINKPNRPLPSNKISLKSATIFSYLLMISGIIISLFNMICFAIALINSIVLYLYAKKYKRNKIIGNLIVAYLTGSIFIFGGASVGNVEITLILFLCALFATWSREIIKDYEDLDGDKSEGVISLPIKYGKNSIFVAIGFLLCSILLSPLPYILGMFGAPYLMAIMICNVLFILAVLKLLKNPSKEIAGSSSKYIKIIMNLVLLSFVIGSLM.

8 consecutive transmembrane segments (helical) span residues 14–34 (VKNC…ASNF), 36–56 (FGLI…CGFG), 94–114 (LMIS…IALI), 131–153 (IIGN…ASVG), 157–175 (ITLI…REII), 201–221 (IFVA…PYIL), 224–244 (FGAP…LAVL), and 259–279 (SKYI…GSLM).

This sequence belongs to the UbiA prenyltransferase family. DGGGP synthase subfamily. It depends on Mg(2+) as a cofactor.

It is found in the cell membrane. The enzyme catalyses sn-3-O-(geranylgeranyl)glycerol 1-phosphate + (2E,6E,10E)-geranylgeranyl diphosphate = 2,3-bis-O-(geranylgeranyl)-sn-glycerol 1-phosphate + diphosphate. Its pathway is membrane lipid metabolism; glycerophospholipid metabolism. Prenyltransferase that catalyzes the transfer of the geranylgeranyl moiety of geranylgeranyl diphosphate (GGPP) to the C2 hydroxyl of (S)-3-O-geranylgeranylglyceryl phosphate (GGGP). This reaction is the second ether-bond-formation step in the biosynthesis of archaeal membrane lipids. This is Digeranylgeranylglyceryl phosphate synthase from Methanococcus aeolicus (strain ATCC BAA-1280 / DSM 17508 / OCM 812 / Nankai-3).